A 381-amino-acid chain; its full sequence is S-(hydroxymethyl)glutathione dehydrogenase (381 aa).

Residue C49 coordinates Zn(2+). Position 50 (H50) interacts with NAD(+). Zn(2+) contacts are provided by H71, E72, C101, C104, C107, C115, and C178. Residues 203–208 (GGGIVG), D227, and 298–300 (IGV) each bind NAD(+).

It belongs to the zinc-containing alcohol dehydrogenase family. Class-III subfamily. Zn(2+) is required as a cofactor.

The catalysed reaction is a primary alcohol + NAD(+) = an aldehyde + NADH + H(+). The enzyme catalyses a secondary alcohol + NAD(+) = a ketone + NADH + H(+). It carries out the reaction S-(hydroxymethyl)glutathione + NADP(+) = S-formylglutathione + NADPH + H(+). It catalyses the reaction S-(hydroxymethyl)glutathione + NAD(+) = S-formylglutathione + NADH + H(+). The catalysed reaction is S-nitrosoglutathione + NADH + H(+) = S-(hydroxysulfenamide)glutathione + NAD(+). Oxidizes long-chain alcohols and, in the presence of glutathione, is able to oxidize formaldehyde. Also acts as a S-nitroso-glutathione reductase by catalyzing the NADH-dependent reduction of S-nitrosoglutathione, thereby regulating protein S-nitrosylation. The chain is S-(hydroxymethyl)glutathione dehydrogenase (FDH1) from Candida maltosa (Yeast).